Consider the following 207-residue polypeptide: LexA repressor (207 aa).

Positions 29-49 (VREICSAVDLSSTSTVHGHLA) form a DNA-binding region, H-T-H motif. Residues serine 128 and lysine 166 each act as for autocatalytic cleavage activity in the active site.

Belongs to the peptidase S24 family. In terms of assembly, homodimer.

It catalyses the reaction Hydrolysis of Ala-|-Gly bond in repressor LexA.. In terms of biological role, represses a number of genes involved in the response to DNA damage (SOS response), including recA and lexA. In the presence of single-stranded DNA, RecA interacts with LexA causing an autocatalytic cleavage which disrupts the DNA-binding part of LexA, leading to derepression of the SOS regulon and eventually DNA repair. This is LexA repressor from Lactobacillus johnsonii (strain CNCM I-12250 / La1 / NCC 533).